The chain runs to 391 residues: GTPase Obg (391 aa).

The region spanning 1–159 is the Obg domain; sequence MKFVDEARIL…RELMLELMLL (159 aa). In terms of domain architecture, OBG-type G spans 160-333; it reads ADVGMLGMPN…LCWDIMEFMK (174 aa). Residues 166–173, 191–195, 213–216, 283–286, and 314–316 contribute to the GTP site; these read GMPNAGKS, FTTLV, DIPG, NKVD, and SAI. Residues Ser-173 and Thr-193 each contribute to the Mg(2+) site.

It belongs to the TRAFAC class OBG-HflX-like GTPase superfamily. OBG GTPase family. In terms of assembly, monomer. The cofactor is Mg(2+).

The protein resides in the cytoplasm. An essential GTPase which binds GTP, GDP and possibly (p)ppGpp with moderate affinity, with high nucleotide exchange rates and a fairly low GTP hydrolysis rate. Plays a role in control of the cell cycle, stress response, ribosome biogenesis and in those bacteria that undergo differentiation, in morphogenesis control. The polypeptide is GTPase Obg (Photorhabdus laumondii subsp. laumondii (strain DSM 15139 / CIP 105565 / TT01) (Photorhabdus luminescens subsp. laumondii)).